A 118-amino-acid polypeptide reads, in one-letter code: Membrane-anchored ubiquitin-fold protein 3 (118 aa).

The Ubiquitin-like domain occupies 7-73; sequence IDIKFRLYDG…LENNKTVGQC (67 aa). Cysteine 113 is lipidated: S-palmitoyl cysteine. Cysteine 115 is subject to Cysteine methyl ester. Residue cysteine 115 is the site of S-geranylgeranyl cysteine attachment. Residues 116–118 constitute a propeptide, removed in mature form; that stretch reads TIL.

Ubiquitous, but three fold higher expression in senescing leaves.

The protein resides in the cell membrane. May serve as docking site to facilitate the association of other proteins to the plasma membrane. This is Membrane-anchored ubiquitin-fold protein 3 (MUB3) from Arabidopsis thaliana (Mouse-ear cress).